A 438-amino-acid chain; its full sequence is uncharacterized protein (438 aa).

Residues 1–20 (MNTRLALVLCAVGSGVLSFS) form the signal peptide. A lipid anchor (N-palmitoyl cysteine) is attached at Cys21. Cys21 is lipidated: S-diacylglycerol cysteine.

The protein resides in the cell membrane. This is an uncharacterized protein from Treponema pallidum (strain Nichols).